The primary structure comprises 463 residues: L-seryl-tRNA(Sec) selenium transferase (463 aa).

An N6-(pyridoxal phosphate)lysine modification is found at Lys295.

It belongs to the SelA family. In terms of assembly, homodecamer; pentamer of dimers. Binds only one seryl-tRNA(Sec) per dimer. The cofactor is pyridoxal 5'-phosphate.

The protein resides in the cytoplasm. It catalyses the reaction L-seryl-tRNA(Sec) + selenophosphate + H(+) = L-selenocysteinyl-tRNA(Sec) + phosphate. It functions in the pathway aminoacyl-tRNA biosynthesis; selenocysteinyl-tRNA(Sec) biosynthesis; selenocysteinyl-tRNA(Sec) from L-seryl-tRNA(Sec) (bacterial route): step 1/1. Functionally, converts seryl-tRNA(Sec) to selenocysteinyl-tRNA(Sec) required for selenoprotein biosynthesis. In Edwardsiella ictaluri (strain 93-146), this protein is L-seryl-tRNA(Sec) selenium transferase.